The chain runs to 1113 residues: Lon protease homolog, mitochondrial (1113 aa).

Residues Met-1–Arg-61 constitute a mitochondrion transit peptide. Positions Ser-42 to Ser-196 are disordered. 3 stretches are compositionally biased toward basic and acidic residues: residues Lys-64–Ala-99, Lys-124–Asn-143, and Asp-178–Leu-192. The region spanning Val-204–Leu-456 is the Lon N-terminal domain. Gly-609 to Thr-616 lines the ATP pocket. Residues Leu-828–Thr-858 are compositionally biased toward basic and acidic residues. Positions Leu-828–Val-864 are disordered. Positions Thr-898 to Asp-1084 constitute a Lon proteolytic domain. Catalysis depends on residues Ser-990 and Lys-1033.

The protein belongs to the peptidase S16 family. As to quaternary structure, homohexamer or homoheptamer. Organized in a ring with a central cavity.

Its subcellular location is the mitochondrion matrix. The catalysed reaction is Hydrolysis of proteins in presence of ATP.. Functionally, ATP-dependent serine protease that mediates the selective degradation of misfolded, unassembled or oxidatively damaged polypeptides as well as certain short-lived regulatory proteins in the mitochondrial matrix. May also have a chaperone function in the assembly of inner membrane protein complexes. Participates in the regulation of mitochondrial gene expression and in the maintenance of the integrity of the mitochondrial genome. Binds to mitochondrial DNA in a site-specific manner. This is Lon protease homolog, mitochondrial (pim1) from Aspergillus niger (strain ATCC MYA-4892 / CBS 513.88 / FGSC A1513).